A 122-amino-acid chain; its full sequence is Large ribosomal subunit protein uL14 (122 aa).

Belongs to the universal ribosomal protein uL14 family. As to quaternary structure, part of the 50S ribosomal subunit. Forms a cluster with proteins L3 and L19. In the 70S ribosome, L14 and L19 interact and together make contacts with the 16S rRNA in bridges B5 and B8.

Its function is as follows. Binds to 23S rRNA. Forms part of two intersubunit bridges in the 70S ribosome. This is Large ribosomal subunit protein uL14 from Staphylococcus haemolyticus (strain JCSC1435).